A 283-amino-acid chain; its full sequence is Putative pyruvate, phosphate dikinase regulatory protein (283 aa).

ADP is bound at residue 156 to 163; the sequence is GLSRAGKT.

The protein belongs to the pyruvate, phosphate/water dikinase regulatory protein family. PDRP subfamily.

It catalyses the reaction N(tele)-phospho-L-histidyl/L-threonyl-[pyruvate, phosphate dikinase] + ADP = N(tele)-phospho-L-histidyl/O-phospho-L-threonyl-[pyruvate, phosphate dikinase] + AMP + H(+). It carries out the reaction N(tele)-phospho-L-histidyl/O-phospho-L-threonyl-[pyruvate, phosphate dikinase] + phosphate + H(+) = N(tele)-phospho-L-histidyl/L-threonyl-[pyruvate, phosphate dikinase] + diphosphate. Its function is as follows. Bifunctional serine/threonine kinase and phosphorylase involved in the regulation of the pyruvate, phosphate dikinase (PPDK) by catalyzing its phosphorylation/dephosphorylation. The polypeptide is Putative pyruvate, phosphate dikinase regulatory protein (Desulfotalea psychrophila (strain LSv54 / DSM 12343)).